The following is a 343-amino-acid chain: Anthranilate phosphoribosyltransferase (343 aa).

5-phospho-alpha-D-ribose 1-diphosphate-binding positions include Gly-84, Gly-87 to Asp-88, Thr-92, Asn-94 to Thr-97, Lys-112 to Ser-120, and Ser-124. Gly-84 is an anthranilate binding site. Residue Ser-96 participates in Mg(2+) binding. Asn-115 lines the anthranilate pocket. Arg-170 is an anthranilate binding site. Residues Asp-229 and Glu-230 each contribute to the Mg(2+) site.

Belongs to the anthranilate phosphoribosyltransferase family. Homodimer. It depends on Mg(2+) as a cofactor.

The enzyme catalyses N-(5-phospho-beta-D-ribosyl)anthranilate + diphosphate = 5-phospho-alpha-D-ribose 1-diphosphate + anthranilate. The protein operates within amino-acid biosynthesis; L-tryptophan biosynthesis; L-tryptophan from chorismate: step 2/5. Functionally, catalyzes the transfer of the phosphoribosyl group of 5-phosphorylribose-1-pyrophosphate (PRPP) to anthranilate to yield N-(5'-phosphoribosyl)-anthranilate (PRA). This chain is Anthranilate phosphoribosyltransferase, found in Burkholderia ambifaria (strain ATCC BAA-244 / DSM 16087 / CCUG 44356 / LMG 19182 / AMMD) (Burkholderia cepacia (strain AMMD)).